The chain runs to 714 residues: Glutamine-dependent NAD(+) synthetase (714 aa).

Positions 5–275 (ITLATCNLNQ…VEVVTATVDL (271 aa)) constitute a CN hydrolase domain. Residue Glu45 is the Proton acceptor; for glutaminase activity of the active site. The active-site For glutaminase activity is the Lys114. Cys175 acts as the Nucleophile; for glutaminase activity in catalysis. The tract at residues 329–714 (YHSPEEEIAL…GSTLDIMSID (386 aa)) is ligase. 359–366 (PLSGGIDS) is a binding site for ATP. Ser361 is a catalytic residue.

In the C-terminal section; belongs to the NAD synthetase family.

The catalysed reaction is deamido-NAD(+) + L-glutamine + ATP + H2O = L-glutamate + AMP + diphosphate + NAD(+) + H(+). Its pathway is cofactor biosynthesis; NAD(+) biosynthesis; NAD(+) from deamido-NAD(+) (L-Gln route): step 1/1. This is Glutamine-dependent NAD(+) synthetase (QNS1) from Saccharomyces cerevisiae (strain ATCC 204508 / S288c) (Baker's yeast).